A 684-amino-acid chain; its full sequence is Collagen alpha-3(IX) chain (684 aa).

A signal peptide spans 1 to 25; the sequence is MAGPRACAPLLLLLLLGELLAAAGA. Disordered regions lie at residues 26-521 and 548-665; these read QRVG…KEAS and LAPG…CDTS. The segment at 29–519 is triple-helical region 3 (COL3); the sequence is GLPGPPGPPG…TGKPGVPGKE (491 aa). Composition is skewed to pro residues over residues 31-42 and 55-64; these read PGPPGPPGPPGK and PGLPGPPGPK. Residues 66–82 show a composition bias toward low complexity; it reads APGKPGKPGEAGLPGLP. Residues 130–139 show a composition bias toward gly residues; that stretch reads GPPGGIGLRG. Composition is skewed to pro residues over residues 140–161 and 177–188; these read PPGP…PPGH and ICPPGPPGPPGM. The span at 200-212 shows a compositional bias: basic and acidic residues; the sequence is EQGEVGKDGEKGD. Low complexity predominate over residues 221–237; that stretch reads LPGSVGLQGPRGLRGLP. Basic and acidic residues-rich tracts occupy residues 264–282 and 344–356; these read AGDR…KGDL and SKGE…RAGE. Positions 423 to 425 match the Cell attachment site motif; sequence RGD. A glycan (N-linked (GlcNAc...) asparagine) is linked at Asn-483. Residues 498–507 show a composition bias toward low complexity; sequence LGLQGVPGVP. Residues 520–550 are nonhelical region 3 (NC3); the sequence is ASEQRIRELCGGMISEQIAQLAAHLRKPLAP. The segment at 551–630 is triple-helical region 2 (COL2); it reads GSIGRPGPAG…QGPQGVPGTS (80 aa). Residues 558-568 are compositionally biased toward pro residues; that stretch reads PAGPPGPPGPP. Positions 570 to 586 are enriched in low complexity; sequence SIGHPGARGPPGYRGPT. Positions 601 to 603 match the Cell attachment site motif; sequence RGD. The segment covering 617 to 628 has biased composition (low complexity); it reads DQGPQGPQGVPG. Residues 631 to 632 are nonhelical region 2 (NC2); the sequence is KD. Positions 633-661 are triple-helical region 1 (COL1); the sequence is GQDGAPGEPGPPGDPGLPGAIGAQGTPGI. A nonhelical region 1 (NC1) region spans residues 662–684; sequence CDTSACQGAVLGGVGEKSGSRSS.

It belongs to the fibril-associated collagens with interrupted helices (FACIT) family. Heterotrimer of an alpha 1(IX), an alpha 2(IX) and an alpha 3(IX) chain. Covalently linked to the telopeptides of type II collagen by lysine-derived cross-links. In terms of processing, prolines at the third position of the tripeptide repeating unit (G-X-Y) are hydroxylated in some or all of the chains.

Its subcellular location is the secreted. The protein localises to the extracellular space. The protein resides in the extracellular matrix. Structural component of hyaline cartilage and vitreous of the eye. The sequence is that of Collagen alpha-3(IX) chain (COL9A3) from Homo sapiens (Human).